The following is a 347-amino-acid chain: Phenylalanine--tRNA ligase alpha subunit (347 aa).

Position 265 (Glu265) interacts with Mg(2+).

It belongs to the class-II aminoacyl-tRNA synthetase family. Phe-tRNA synthetase alpha subunit type 1 subfamily. As to quaternary structure, tetramer of two alpha and two beta subunits. It depends on Mg(2+) as a cofactor.

It localises to the cytoplasm. The enzyme catalyses tRNA(Phe) + L-phenylalanine + ATP = L-phenylalanyl-tRNA(Phe) + AMP + diphosphate + H(+). This is Phenylalanine--tRNA ligase alpha subunit from Mycolicibacterium vanbaalenii (strain DSM 7251 / JCM 13017 / BCRC 16820 / KCTC 9966 / NRRL B-24157 / PYR-1) (Mycobacterium vanbaalenii).